The chain runs to 550 residues: Chaperonin GroEL (550 aa).

ATP-binding positions include 30–33, lysine 51, 87–91, glycine 415, 479–481, and aspartate 495; these read TLGP, DGTTT, and NAA. The segment at 526–550 is disordered; it reads KDEKSDLGNSSAPSAGGMGGMGGMM. Positions 541 to 550 are enriched in gly residues; that stretch reads GGMGGMGGMM.

This sequence belongs to the chaperonin (HSP60) family. As to quaternary structure, forms a cylinder of 14 subunits composed of two heptameric rings stacked back-to-back. Interacts with the co-chaperonin GroES.

It localises to the cytoplasm. It carries out the reaction ATP + H2O + a folded polypeptide = ADP + phosphate + an unfolded polypeptide.. Functionally, together with its co-chaperonin GroES, plays an essential role in assisting protein folding. The GroEL-GroES system forms a nano-cage that allows encapsulation of the non-native substrate proteins and provides a physical environment optimized to promote and accelerate protein folding. The sequence is that of Chaperonin GroEL from Buchnera aphidicola subsp. Baizongia pistaciae (strain Bp).